The following is a 182-amino-acid chain: Large ribosomal subunit protein uL5 (182 aa).

It belongs to the universal ribosomal protein uL5 family. Part of the 50S ribosomal subunit; part of the 5S rRNA/L5/L18/L25 subcomplex. Contacts the 5S rRNA and the P site tRNA. Forms a bridge to the 30S subunit in the 70S ribosome.

This is one of the proteins that bind and probably mediate the attachment of the 5S RNA into the large ribosomal subunit, where it forms part of the central protuberance. In the 70S ribosome it contacts protein S13 of the 30S subunit (bridge B1b), connecting the 2 subunits; this bridge is implicated in subunit movement. Contacts the P site tRNA; the 5S rRNA and some of its associated proteins might help stabilize positioning of ribosome-bound tRNAs. This is Large ribosomal subunit protein uL5 from Nostoc sp. (strain PCC 7120 / SAG 25.82 / UTEX 2576).